Consider the following 349-residue polypeptide: Anthranilate phosphoribosyltransferase (349 aa).

5-phospho-alpha-D-ribose 1-diphosphate-binding positions include Gly82, 85–86 (GD), 92–95 (NVST), 110–118 (KHGNRAVSG), and Ser122. Gly82 lines the anthranilate pocket. Residue Ser94 participates in Mg(2+) binding. Asn113 lines the anthranilate pocket. Arg168 serves as a coordination point for anthranilate. Mg(2+) contacts are provided by Asp227 and Glu228.

This sequence belongs to the anthranilate phosphoribosyltransferase family. Homodimer. The cofactor is Mg(2+).

The enzyme catalyses N-(5-phospho-beta-D-ribosyl)anthranilate + diphosphate = 5-phospho-alpha-D-ribose 1-diphosphate + anthranilate. The protein operates within amino-acid biosynthesis; L-tryptophan biosynthesis; L-tryptophan from chorismate: step 2/5. Functionally, catalyzes the transfer of the phosphoribosyl group of 5-phosphorylribose-1-pyrophosphate (PRPP) to anthranilate to yield N-(5'-phosphoribosyl)-anthranilate (PRA). The protein is Anthranilate phosphoribosyltransferase of Pseudomonas fluorescens (strain SBW25).